The sequence spans 426 residues: Chordin-like protein 2 (426 aa).

Residues 1–25 form the signal peptide; it reads MVPGVRIIPSLLGLVMFWLPLDSQA. VWFC domains are found at residues 31-96 and 109-175; these read KVCL…PRCV and KSCQ…QTCK. N-linked (GlcNAc...) asparagine glycosylation is present at asparagine 114. Serine 182 is modified (phosphoserine). A compositionally biased stretch (polar residues) spans 182–191; it reads STEENLTQLQ. Positions 182 to 216 are disordered; that stretch reads STEENLTQLQHGERHSQDPCSERRGPSTPAPTSLS. Asparagine 186 carries an N-linked (GlcNAc...) asparagine glycan. A compositionally biased stretch (basic and acidic residues) spans 192 to 206; the sequence is HGERHSQDPCSERRG. The segment covering 207–216 has biased composition (low complexity); the sequence is PSTPAPTSLS. One can recognise a VWFC 3 domain in the interval 246–311; it reads KACTHNGKTY…VAGKCCKICP (66 aa).

In terms of assembly, interacts with GDF5. May interact with INHBA, BMP2, BMP4, BMP5, BMP6, and BMP7. As to expression, weakly expressed in the liver and kidney. In reproductive organs expressed in connective tissues such as ligaments of the ovary and oviduct in females, and of testis, epididymis and certain male accessory sex glands in males. Expression was high in uterine myometrium. Weakly expressed in cartilage of the femoral head, patella, articular facets of vertebrae, in the annulus fibrosus of intervertebral disks. In normal cartilage, expression was confined to articular chondrocytes especially in the superficial zone.

It localises to the secreted. Functionally, implicated in tumor angiogenesis. May inhibits BMPs activity by blocking their interaction with their receptors. Has a negative regulator effect on the cartilage formation/regeneration from immature mesenchymal cells, by preventing or reducing the rate of matrix accumulation. May play a role during myoblast and osteoblast differentiation, and maturation. The sequence is that of Chordin-like protein 2 (Chrdl2) from Mus musculus (Mouse).